Consider the following 286-residue polypeptide: uncharacterized protein (286 aa).

Residues 26–268 form the AB hydrolase-1 domain; sequence PLIILCHGFC…DACHYDIYEG (243 aa).

The protein belongs to the AB hydrolase superfamily.

This is an uncharacterized protein from Escherichia coli.